The chain runs to 70 residues: uncharacterized protein (70 aa).

This is an uncharacterized protein from Swinepox virus (strain Kasza) (SWPV).